Here is a 659-residue protein sequence, read N- to C-terminus: tRNA (guanine(26)-N(2))-dimethyltransferase (659 aa).

A mitochondrion-targeting transit peptide spans 1 to 23 (MQGSSLWLSLTFRSARVLSRARF). One can recognise a Trm1 methyltransferase domain in the interval 55 to 499 (TTVTEGAAKI…APASALWDIM (445 aa)). Residue Arg82 coordinates S-adenosyl-L-methionine. Ser120 carries the phosphoserine modification. The S-adenosyl-L-methionine site is built by Arg166 and Asp184. Positions 348, 351, 384, and 387 each coordinate Zn(2+). Residue Ser517 is modified to Phosphoserine. Disordered regions lie at residues 537–578 (EDAN…AMEE) and 616–659 (RGDQ…PGID). The Nuclear localization signal motif lies at 543-575 (SRQRGLKRFQANPEANWGPRPRARPGGKAADEA). Residues 600 to 627 (RLKTFPCKRFKEGTCQRGDQCCYSHSPP) form a C3H1-type zinc finger. Residue Ser625 is modified to Phosphoserine. A phosphothreonine mark is found at Thr628 and Thr646.

This sequence belongs to the class I-like SAM-binding methyltransferase superfamily. Trm1 family. Post-translationally, (Microbial infection) Cleaved between Gln-530 and Ala-531 by the 3C-like proteinase nsp5 from human coronavirus SARS-CoV-2, leading to its inactivation.

The protein localises to the mitochondrion. It localises to the nucleus. Its subcellular location is the cytoplasm. The catalysed reaction is guanosine(26) in tRNA + 2 S-adenosyl-L-methionine = N(2)-dimethylguanosine(26) in tRNA + 2 S-adenosyl-L-homocysteine + 2 H(+). Functionally, dimethylates a single guanine residue at position 26 of most nuclear- and mitochondrial-encoded tRNAs using S-adenosyl-L-methionine as donor of the methyl groups. tRNA guanine(26)-dimethylation is required for redox homeostasis and ensure proper cellular proliferation and oxidative stress survival. The chain is tRNA (guanine(26)-N(2))-dimethyltransferase from Homo sapiens (Human).